We begin with the raw amino-acid sequence, 700 residues long: Polyribonucleotide nucleotidyltransferase (700 aa).

Mg(2+)-binding residues include Asp-485 and Asp-491. One can recognise a KH domain in the interval 552 to 611 (PRITTLKINPEKIRDVIGKGGATIRALTEETGTTIELEDDGTVKIASANGDATKEAIRRI). An S1 motif domain is found at 621 to 689 (GTVYNGKVVR…RQGRVRLSMK (69 aa)).

This sequence belongs to the polyribonucleotide nucleotidyltransferase family. As to quaternary structure, component of the RNA degradosome, which is a multiprotein complex involved in RNA processing and mRNA degradation. Mg(2+) serves as cofactor.

The protein localises to the cytoplasm. The enzyme catalyses RNA(n+1) + phosphate = RNA(n) + a ribonucleoside 5'-diphosphate. In terms of biological role, involved in mRNA degradation. Catalyzes the phosphorolysis of single-stranded polyribonucleotides processively in the 3'- to 5'-direction. In Shewanella loihica (strain ATCC BAA-1088 / PV-4), this protein is Polyribonucleotide nucleotidyltransferase.